The following is a 341-amino-acid chain: Anthranilate phosphoribosyltransferase (341 aa).

Residues G79, 82–83 (GD), T87, 89–92 (NIST), 107–115 (KHGNRAVSS), and S119 contribute to the 5-phospho-alpha-D-ribose 1-diphosphate site. G79 contacts anthranilate. S91 contacts Mg(2+). N110 provides a ligand contact to anthranilate. R165 is a binding site for anthranilate. The Mg(2+) site is built by D224 and E225.

This sequence belongs to the anthranilate phosphoribosyltransferase family. As to quaternary structure, homodimer. Requires Mg(2+) as cofactor.

It carries out the reaction N-(5-phospho-beta-D-ribosyl)anthranilate + diphosphate = 5-phospho-alpha-D-ribose 1-diphosphate + anthranilate. It functions in the pathway amino-acid biosynthesis; L-tryptophan biosynthesis; L-tryptophan from chorismate: step 2/5. Functionally, catalyzes the transfer of the phosphoribosyl group of 5-phosphorylribose-1-pyrophosphate (PRPP) to anthranilate to yield N-(5'-phosphoribosyl)-anthranilate (PRA). The polypeptide is Anthranilate phosphoribosyltransferase (Bacillus mycoides (strain KBAB4) (Bacillus weihenstephanensis)).